Consider the following 92-residue polypeptide: Small ribosomal subunit protein uS19 (92 aa).

It belongs to the universal ribosomal protein uS19 family.

Protein S19 forms a complex with S13 that binds strongly to the 16S ribosomal RNA. In Ruegeria pomeroyi (strain ATCC 700808 / DSM 15171 / DSS-3) (Silicibacter pomeroyi), this protein is Small ribosomal subunit protein uS19.